A 334-amino-acid chain; its full sequence is Hematopoietic SH2 domain-containing protein (334 aa).

One can recognise an SH2 domain in the interval 34–125; that stretch reads WFHGTISREA…PFGELLTQAC (92 aa). Disordered regions lie at residues 157–181 and 254–280; these read EVQR…KGEF and EDSC…ATFR. Polar residues predominate over residues 258-267; it reads AATTSLQNPA.

In terms of assembly, interacts with FES and TNK2. May be phosphorylated by FES and ACK1. In terms of tissue distribution, predominantly expressed in spleen and thymus. Appears not to be expressed in heart, brain, liver, kidney, embryo, lung and ovary.

The protein localises to the cytoplasm. Its subcellular location is the mitochondrion. Its function is as follows. Adapter protein involved in tyrosine kinase and CD28 signaling. May be a modulator of the apoptotic response through its ability to affect mitochondrial stability. The sequence is that of Hematopoietic SH2 domain-containing protein (Hsh2d) from Mus musculus (Mouse).